Here is a 37-residue protein sequence, read N- to C-terminus: Large ribosomal subunit protein bL36c (37 aa).

Belongs to the bacterial ribosomal protein bL36 family.

Its subcellular location is the plastid. It localises to the chloroplast. The chain is Large ribosomal subunit protein bL36c from Phalaenopsis aphrodite subsp. formosana (Moth orchid).